The sequence spans 528 residues: MKANFGYITPVPLNMELIDISLSKTQKRTPTVIHPQYNIVKIRMFYMRKVKHAGNEFASRLGTILTDFPRIEDIHPFYGDLINVLYDRDHYKLALGHVNAAKNGIEKVSKEFVKLLKFADSLYRCKQLKRAALGRMASAAKKLGKTLEYLEEVRMHMSRLPSIDLSGRTLLVCGFPNVGKSSFVRKISRADVEVQPYPFTTKSLYVGHFDYKYLQWQVIDTPGILDQPLENRNTIEMLSITALAHIKAVVLYFIDLSETCGYSVEEQMDLFNTLNPLLSSNMVIVLSKSDVLGLSGMEDKKAIMSFLEGKKYMEMSCEKEENIDAVKAMACDLLLDERFERKINSERLSEYINRITIVRPKELREKAESFICSREVTEIENEQERYLIPEEYRYDIVPEIVDGKNVADFFDPDIEKKLKEVEEEEEGLLPMYCKTYDVLSPEERALKEEVVAGIERRRIINRLREKKRLPDSWKHRSRNSGGDIAVHVRRDSKTQVAQPPRLPSKKKARFDDKHYYDRKPKHLYRGRK.

The OBG-type G domain maps to 168-335 (RTLLVCGFPN…VKAMACDLLL (168 aa)). Residues 174 to 181 (GFPNVGKS), 220 to 224 (DTPGI), and 287 to 290 (SKSD) each bind GTP. Residues 470–528 (PDSWKHRSRNSGGDIAVHVRRDSKTQVAQPPRLPSKKKARFDDKHYYDRKPKHLYRGRK) form a disordered region. Positions 509–518 (RFDDKHYYDR) are enriched in basic and acidic residues. Positions 519–528 (KPKHLYRGRK) are enriched in basic residues.

This sequence belongs to the TRAFAC class OBG-HflX-like GTPase superfamily. OBG GTPase family. NOG subfamily.

The protein resides in the nucleus. The protein localises to the nucleolus. Functionally, involved in the biogenesis of the 60S ribosomal subunit. The polypeptide is Nucleolar GTP-binding protein 1 (NOG1) (Encephalitozoon cuniculi (strain GB-M1) (Microsporidian parasite)).